Consider the following 137-residue polypeptide: Molluscan insulin-related peptide 2 (137 aa).

The first 31 residues, 1–31 (MVGVRLVFTNAFVVTVLLTLLLDVVVKPAEG), serve as a signal peptide directing secretion. At Gln32 the chain carries Pyrrolidone carboxylic acid. 3 disulfide bridges follow: Cys47/Cys123, Cys59/Cys136, and Cys122/Cys127. A propeptide spans 71–83 (DAETGWLLPETMV) (C-beta peptide like). Residues 86–110 (NAETDLDDPLRNIKLSSESALTYLT) constitute a propeptide, C-alpha peptide like. A Pyrrolidone carboxylic acid modification is found at Gln113.

Belongs to the insulin family. As to quaternary structure, heterodimer of a B chain and an A chain linked by two disulfide bonds. As to expression, expressed in the cerebral light-green cells which are giant neuroendocrines cells involved in the control of growth.

Its subcellular location is the cytoplasmic vesicle. The protein localises to the secretory vesicle. The chain is Molluscan insulin-related peptide 2 from Lymnaea stagnalis (Great pond snail).